We begin with the raw amino-acid sequence, 142 residues long: 3-hydroxyacyl-[acyl-carrier-protein] dehydratase FabZ (142 aa).

Histidine 48 is an active-site residue.

The protein belongs to the thioester dehydratase family. FabZ subfamily.

It is found in the cytoplasm. It carries out the reaction a (3R)-hydroxyacyl-[ACP] = a (2E)-enoyl-[ACP] + H2O. Functionally, involved in unsaturated fatty acids biosynthesis. Catalyzes the dehydration of short chain beta-hydroxyacyl-ACPs and long chain saturated and unsaturated beta-hydroxyacyl-ACPs. The chain is 3-hydroxyacyl-[acyl-carrier-protein] dehydratase FabZ from Clostridioides difficile (strain 630) (Peptoclostridium difficile).